The primary structure comprises 262 residues: Acyl-[acyl-carrier-protein]--UDP-N-acetylglucosamine O-acyltransferase (262 aa).

This sequence belongs to the transferase hexapeptide repeat family. LpxA subfamily. In terms of assembly, homotrimer.

It is found in the cytoplasm. The enzyme catalyses a (3R)-hydroxyacyl-[ACP] + UDP-N-acetyl-alpha-D-glucosamine = a UDP-3-O-[(3R)-3-hydroxyacyl]-N-acetyl-alpha-D-glucosamine + holo-[ACP]. The protein operates within glycolipid biosynthesis; lipid IV(A) biosynthesis; lipid IV(A) from (3R)-3-hydroxytetradecanoyl-[acyl-carrier-protein] and UDP-N-acetyl-alpha-D-glucosamine: step 1/6. Its function is as follows. Involved in the biosynthesis of lipid A, a phosphorylated glycolipid that anchors the lipopolysaccharide to the outer membrane of the cell. The polypeptide is Acyl-[acyl-carrier-protein]--UDP-N-acetylglucosamine O-acyltransferase (Burkholderia orbicola (strain MC0-3)).